An 857-amino-acid chain; its full sequence is Leucine--tRNA ligase (857 aa).

The short motif at Pro42–His52 is the 'HIGH' region element. The 'KMSKS' region signature appears at Lys620 to Ser624. ATP is bound at residue Lys623.

It belongs to the class-I aminoacyl-tRNA synthetase family.

Its subcellular location is the cytoplasm. It carries out the reaction tRNA(Leu) + L-leucine + ATP = L-leucyl-tRNA(Leu) + AMP + diphosphate. The chain is Leucine--tRNA ligase from Thiobacillus denitrificans (strain ATCC 25259 / T1).